The sequence spans 101 residues: Replication restart protein PriB (101 aa).

Residues 1-101 (MATNHLVLSG…LHAENVELKT (101 aa)) enclose the SSB domain.

Belongs to the PriB family. In terms of assembly, homodimer. Interacts with PriA and DnaT. Component of the replication restart primosome. Primosome assembly occurs via a 'hand-off' mechanism. PriA binds to replication forks, subsequently PriB then DnaT bind; DnaT then displaces ssDNA to generate the helicase loading substrate.

Involved in the restart of stalled replication forks, which reloads the replicative helicase on sites other than the origin of replication; the PriA-PriB pathway is the major replication restart pathway. During primosome assembly it facilitates complex formation between PriA and DnaT on DNA; stabilizes PriA on DNA. Stimulates the DNA unwinding activity of PriA helicase. The sequence is that of Replication restart protein PriB from Shewanella sediminis (strain HAW-EB3).